A 303-amino-acid polypeptide reads, in one-letter code: N-acetyl-D-glucosamine kinase (303 aa).

ATP is bound by residues 4–11 (GFDIGGTK) and 133–140 (GVGGGLVL). Positions 157, 177, 179, and 184 each coordinate Zn(2+).

The protein belongs to the ROK (NagC/XylR) family. NagK subfamily.

The enzyme catalyses N-acetyl-D-glucosamine + ATP = N-acetyl-D-glucosamine 6-phosphate + ADP + H(+). It functions in the pathway cell wall biogenesis; peptidoglycan recycling. Functionally, catalyzes the phosphorylation of N-acetyl-D-glucosamine (GlcNAc) derived from cell-wall degradation, yielding GlcNAc-6-P. This Salmonella paratyphi A (strain ATCC 9150 / SARB42) protein is N-acetyl-D-glucosamine kinase.